Consider the following 515-residue polypeptide: Pescadillo homolog (515 aa).

Positions 270 to 327 (EVLAALNHTLKIIQTQEEDLEVDEFPIDPNSEDAEAIQAQKEEETKLERLKNLFSECK) form a coiled coil. The region spanning 318 to 411 (RLKNLFSECK…KLLPVEEYFP (94 aa)) is the BRCT domain. A disordered region spans residues 477-515 (RLYEKIMHSKKKKRSEVRKLESKRKVHDEEKAKKKLKSS). Residues 484-501 (HSKKKKRSEVRKLESKRK) are compositionally biased toward basic residues.

It belongs to the pescadillo family.

The protein resides in the nucleus. It localises to the nucleolus. It is found in the nucleoplasm. Required for maturation of ribosomal RNAs and formation of the large ribosomal subunit. This Nematostella vectensis (Starlet sea anemone) protein is Pescadillo homolog.